The following is a 514-amino-acid chain: H/ACA ribonucleoprotein complex subunit DKC1 (514 aa).

N-acetylalanine is present on Ala2. Residues 2–21 (ADAEVIILPKKHKKKKERKS) form a nucleolar localization region. Lys20 participates in a covalent cross-link: Glycyl lysine isopeptide (Lys-Gly) (interchain with G-Cter in SUMO2). Ser21 is modified (phosphoserine). Residues Lys39 and Lys43 each participate in a glycyl lysine isopeptide (Lys-Gly) (interchain with G-Cter in SUMO2) cross-link. Asp125 functions as the Nucleophile in the catalytic mechanism. Lys191 participates in a covalent cross-link: Glycyl lysine isopeptide (Lys-Gly) (interchain with G-Cter in SUMO2). The PUA domain maps to 296–371 (HKRLVMKDSA…IVAKIKRVIM (76 aa)). Ser387 carries the phosphoserine modification. A Glycyl lysine isopeptide (Lys-Gly) (interchain with G-Cter in SUMO2) cross-link involves residue Lys394. Residue Lys413 forms a Glycyl lysine isopeptide (Lys-Gly) (interchain with G-Cter in SUMO1); alternate linkage. A Glycyl lysine isopeptide (Lys-Gly) (interchain with G-Cter in SUMO2); alternate cross-link involves residue Lys413. Glycyl lysine isopeptide (Lys-Gly) (interchain with G-Cter in SUMO2) cross-links involve residues Lys424 and Lys433. The disordered stretch occupies residues 443 to 514 (KTAKRKRESE…KAKEVELVSE (72 aa)). A nuclear and nucleolar localization region spans residues 446 to 514 (KRKRESESES…KAKEVELVSE (69 aa)). Residues Ser451, Ser453, and Ser455 each carry the phosphoserine modification. Thr458 carries the post-translational modification Phosphothreonine. Residue Lys467 forms a Glycyl lysine isopeptide (Lys-Gly) (interchain with G-Cter in SUMO2) linkage. Positions 468 to 480 (KEKKKSKKDKKAK) are enriched in basic residues. Phosphoserine occurs at positions 485, 494, and 513.

It belongs to the pseudouridine synthase TruB family. Part of the H/ACA small nucleolar ribonucleoprotein (H/ACA snoRNP) complex, which contains NHP2/NOLA2, GAR1/NOLA1, NOP10/NOLA3, and DKC1/NOLA4, which is presumed to be the catalytic subunit. The complex contains a stable core formed by binding of one or two NOP10-DKC1 heterodimers to NHP2; GAR1 subsequently binds to this core via DKC1. The complex binds a box H/ACA small nucleolar RNA (snoRNA), which may target the specific site of modification within the RNA substrate. During assembly, the complex contains NAF1 instead of GAR1/NOLA1. The complex also interacts with TERC, which contains a 3'-terminal domain related to the box H/ACA snoRNAs. Specific interactions with snoRNAs or TERC are mediated by GAR1 and NHP2. Associates with NOLC1/NOPP140. H/ACA snoRNPs interact with the SMN complex, consisting of SMN1 or SMN2, GEMIN2/SIP1, DDX20/GEMIN3, and GEMIN4. This is mediated by interaction between GAR1 and SMN1 or SMN2. The SMN complex may be required for correct assembly of the H/ACA snoRNP complex. Component of the telomerase holoenzyme complex composed of one molecule of TERT, one molecule of WRAP53/TCAB1, two molecules of H/ACA ribonucleoprotein complex subunits DKC1, NOP10, NHP2 and GAR1, and a telomerase RNA template component (TERC). The telomerase holoenzyme complex is associated with TEP1, SMG6/EST1A and POT1. Interacts with SHQ1; this interaction may lead to the stabilization of DKC1, from the time of its synthesis until its association with NOP10, NHP2, and NAF1 at the nascent H/ACA RNA. Interacts with HMBOX1. Interacts with DHX36. In terms of tissue distribution, ubiquitously expressed.

It is found in the nucleus. Its subcellular location is the nucleolus. The protein resides in the cajal body. It localises to the cytoplasm. The enzyme catalyses uridine in 5S rRNA = pseudouridine in 5S rRNA. In terms of biological role, catalytic subunit of H/ACA small nucleolar ribonucleoprotein (H/ACA snoRNP) complex, which catalyzes pseudouridylation of rRNA. This involves the isomerization of uridine such that the ribose is subsequently attached to C5, instead of the normal N1. Each rRNA can contain up to 100 pseudouridine ('psi') residues, which may serve to stabilize the conformation of rRNAs. Required for ribosome biogenesis and telomere maintenance. Also required for correct processing or intranuclear trafficking of TERC, the RNA component of the telomerase reverse transcriptase (TERT) holoenzyme. Promotes cell to cell and cell to substratum adhesion, increases the cell proliferation rate and leads to cytokeratin hyper-expression. This chain is H/ACA ribonucleoprotein complex subunit DKC1, found in Homo sapiens (Human).